The chain runs to 233 residues: Type II methyltransferase M.MunI (233 aa).

The protein belongs to the MT-A70-like family.

The catalysed reaction is a 2'-deoxyadenosine in DNA + S-adenosyl-L-methionine = an N(6)-methyl-2'-deoxyadenosine in DNA + S-adenosyl-L-homocysteine + H(+). A methylase that recognizes the double-stranded sequence 5'-CAATTG-3', methylates A-3 on both strands, and protects the DNA from cleavage by the MunI endonuclease. In Mycoplasma sp, this protein is Type II methyltransferase M.MunI.